The sequence spans 255 residues: Proliferating cell nuclear antigen 2 (255 aa).

Residues 61 to 80 mediate DNA binding; sequence HCDRNVSLGLDLKSLGKVLK.

Belongs to the PCNA family. Homotrimer. Interacts with the catalytic subunits of two DNA polymerase complexes: PolD1 in the delta complex and PolE1/DNApol-epsilon255 in the epsilon complex.

Its subcellular location is the nucleus. It is found in the chromosome. The protein localises to the cytoplasm. Functionally, likely to be an auxiliary protein of DNA polymerase delta complex and is probably involved in the control of DNA replication and repair by increasing the polymerase's processibility. May function independently of PCNA during DNA repair. The polypeptide is Proliferating cell nuclear antigen 2 (Drosophila melanogaster (Fruit fly)).